Reading from the N-terminus, the 282-residue chain is NADPH-dependent 7-cyano-7-deazaguanine reductase (282 aa).

Residue Ile88 to Ser90 coordinates substrate. An NADPH-binding site is contributed by Ser90–Lys91. Catalysis depends on Cys189, which acts as the Thioimide intermediate. Catalysis depends on Asp196, which acts as the Proton donor. Residue His228 to Glu229 coordinates substrate. Arg257–Gly258 provides a ligand contact to NADPH.

It belongs to the GTP cyclohydrolase I family. QueF type 2 subfamily. In terms of assembly, homodimer.

It is found in the cytoplasm. The catalysed reaction is 7-aminomethyl-7-carbaguanine + 2 NADP(+) = 7-cyano-7-deazaguanine + 2 NADPH + 3 H(+). It participates in tRNA modification; tRNA-queuosine biosynthesis. Functionally, catalyzes the NADPH-dependent reduction of 7-cyano-7-deazaguanine (preQ0) to 7-aminomethyl-7-deazaguanine (preQ1). In Photorhabdus laumondii subsp. laumondii (strain DSM 15139 / CIP 105565 / TT01) (Photorhabdus luminescens subsp. laumondii), this protein is NADPH-dependent 7-cyano-7-deazaguanine reductase.